The sequence spans 487 residues: Histamine H1 receptor (487 aa).

At 1-29 (MSLPNSSCLLEDKMCESNKTTMASPQLMP) the chain is on the extracellular side. N-linked (GlcNAc...) asparagine glycans are attached at residues asparagine 5 and asparagine 18. Residues 30–50 (LVVVLSTICLVTVGLNLLVLY) traverse the membrane as a helical segment. The Cytoplasmic segment spans residues 51–64 (AVRSERKLHTVGNL). Residues 65–89 (YIVSLSVADLIVGAVVMPMNILYLL) traverse the membrane as a helical segment. The Extracellular portion of the chain corresponds to 90–97 (MSKWSLGR). The helical transmembrane segment at 98 to 123 (PLCLFWLSMDYVASTASIFSVFILCI) threads the bilayer. Cysteine 100 and cysteine 180 are joined by a disulfide. Positions 107 and 112 each coordinate histamine. An important for agonist binding region spans residues 107–112 (DYVAST). Residues 124 to 144 (DRYRSVQQPLRYLKYRTKTRA) lie on the Cytoplasmic side of the membrane. Phosphothreonine occurs at positions 140 and 142. The helical transmembrane segment at 145–164 (SATILGAWFLSFLWVIPILG) threads the bilayer. Topologically, residues 165 to 188 (WNHFMQQTSVRREDKCETDFYDVT) are extracellular. Residues 189–211 (WFKVMTAIINFYLPTLLMLWFYA) traverse the membrane as a helical segment. Asparagine 198 provides a ligand contact to histamine. Residues 212 to 416 (KIYKAVRQHC…MNRERKAAKQ (205 aa)) are Cytoplasmic-facing. Position 230 is a phosphoserine (serine 230). The span at 238 to 261 (KLRPENPKGDAKKPGKESPWEVLK) shows a compositional bias: basic and acidic residues. Positions 238–292 (KLRPENPKGDAKKPGKESPWEVLKRKPKDAGGGSVLKSPSQTPKEMKSPVVFSQE) are disordered. Threonine 279 bears the Phosphothreonine mark. A phosphoserine mark is found at serine 344 and serine 347. Residues 345–377 (EISEDQMLGDSQSFSRTDSDTTTETASGKGKLR) form a disordered region. Positions 353–370 (GDSQSFSRTDSDTTTETA) are enriched in polar residues. 3 positions are modified to phosphoserine: serine 380, serine 396, and serine 398. The chain crosses the membrane as a helical span at residues 417–440 (LGFIMAAFILCWIPYFIFFMVIAF). The important for agonist binding stretch occupies residues 424-428 (FILCW). Position 431 (tyrosine 431) interacts with histamine. A disulfide bond links cysteine 441 and cysteine 444. Topologically, residues 441–446 (CKNCCN) are extracellular. A helical transmembrane segment spans residues 447–469 (EHLHMFTIWLGYINSTLNPLIYP). Over 470–487 (LCNENFKKTFKRILHIRS) the chain is Cytoplasmic.

It belongs to the G-protein coupled receptor 1 family. In terms of processing, phosphorylation at sites in the second and third cytoplasmic loops independently contribute to agonist-induced receptor down-regulation.

The protein resides in the cell membrane. In terms of biological role, G-protein-coupled receptor for histamine, a biogenic amine that functions as an immune modulator and a neurotransmitter. Through the H1 receptor, histamine mediates the contraction of smooth muscles and increases capillary permeability due to contraction of terminal venules. Also mediates neurotransmission in the central nervous system and thereby regulates circadian rhythms, emotional and locomotor activities as well as cognitive functions. This chain is Histamine H1 receptor, found in Gorilla gorilla gorilla (Western lowland gorilla).